Here is a 337-residue protein sequence, read N- to C-terminus: Viral cathepsin (337 aa).

The signal sequence occupies residues 1–16; it reads MNKLLILFLLLNAALT. A propeptide spans 17-126 (activation peptide); sequence RQDNHASANN…VVDGPAQRQR (110 aa). Intrachain disulfides connect C147–C188, C181–C221, and C276–C324. C150 is a catalytic residue. Residues H283 and N303 contribute to the active site.

This sequence belongs to the peptidase C1 family. Synthesized as an inactive proenzyme and activated by proteolytic removal of the inhibitory propeptide.

The catalysed reaction is Endopeptidase of broad specificity, hydrolyzing substrates of both cathepsin L and cathepsin B.. Cysteine protease that plays an essential role in host liquefaction to facilitate horizontal transmission of the virus. May participate in the degradation of foreign protein expressed by the baculovirus system. The chain is Viral cathepsin (VCATH) from Lepidoptera (butterflies and moths).